We begin with the raw amino-acid sequence, 110 residues long: Phosphoribosyl-AMP cyclohydrolase (110 aa).

D74 is a binding site for Mg(2+). Residue C75 coordinates Zn(2+). D76 and D78 together coordinate Mg(2+). Zn(2+) is bound by residues C91 and C98.

Belongs to the PRA-CH family. In terms of assembly, homodimer. It depends on Mg(2+) as a cofactor. The cofactor is Zn(2+).

The protein localises to the cytoplasm. The enzyme catalyses 1-(5-phospho-beta-D-ribosyl)-5'-AMP + H2O = 1-(5-phospho-beta-D-ribosyl)-5-[(5-phospho-beta-D-ribosylamino)methylideneamino]imidazole-4-carboxamide. The protein operates within amino-acid biosynthesis; L-histidine biosynthesis; L-histidine from 5-phospho-alpha-D-ribose 1-diphosphate: step 3/9. Its function is as follows. Catalyzes the hydrolysis of the adenine ring of phosphoribosyl-AMP. This is Phosphoribosyl-AMP cyclohydrolase from Lacticaseibacillus casei (strain BL23) (Lactobacillus casei).